Here is a 230-residue protein sequence, read N- to C-terminus: Sugar fermentation stimulation protein homolog (230 aa).

This sequence belongs to the SfsA family.

This Clostridium perfringens (strain ATCC 13124 / DSM 756 / JCM 1290 / NCIMB 6125 / NCTC 8237 / Type A) protein is Sugar fermentation stimulation protein homolog.